Consider the following 1193-residue polypeptide: MSSIRVVCRFRPQNKLELAQGGDSIVSIAPENDSVTINGSESNHSFSFDYVFPSNTTQRDVYDHAAKPVIEDIMAGYNGTLFVYGQTGSGKTFSMTGINDPNGDQELRGIVPRMIETVFEFISNADENIEFIVKASYIEIYMERIRDLLDTRKDNLKVREEKGKGVWVEGTSEVYIYREEDILDVINTGISNRAIAETRMNAESSRSHSIFILTIQQKNLKVGSIKTGKLYLVDLAGSEKISKTGAQGTTLDEAKMINKSLSSLGNVINALTDGKSTHIPYRDSKLTRVLQESLGGNSRTTLIINCSPSSYNEAETISTLRFGSRAKNIKNKAKINQERSAAELKILLSKAENEIENLKGYIKELETVSGVTVSNLKSSGSGSGSGSGSSSSSSGSSGGSGSGGSSNLSNSVNSTSNLNTSSNTSSSNVNANANVITTSVSAPTSPKDTELIKVLQEKCIQLEKQLFKKEEEKKEILEQLEQQQEQIQDKDQEIEGLNSMIESSNNINSLYQNSTNENSVLNVQLSELKLALEKSRFEATEQSLTIEGLNEENQSIKSQLEILKDRIAQSGDSSIASLVPSTPKSSAEMDPLATASKHADEWNEKAEQLKLLQRTPSKAVGSSKSNTATSSPIISLNISESDNIGSGATTTTNNNNATITPATSSNNNVEQQQQQVEELLPSVNEQLLESENQKLQKRIQEIELEFETYKIAKENLTMQKDLEIEQLLESQRISSSFVVDPRNLDDELPAEMMLQAEQIRKLIAENSEQKVHFEATKNENSKLKNRIEMIEEETRQRMEEELNVLREQTNQKLSEFGSLKESLIRDLENRCQKVIDLELVLDELQDRIVTLNERLKRVNKPGGGDQEAAFVQSKLDEITAVKHQLVIENNKHKTEVERLKKLLSHRGEHILILEKTMAINQESLFKLALNHNALTIEHDRAKNELEKLNNLLSQVGVDAQNTGGARVARVIRGGGGNNQLKKFNHSSSSSTSSSSALNHSSINNNHTTPTPLSANLYSNTKRSTKELNTGVKAEPLSLSGSPFNTSIPSSPNHTSSNNINNNSNNNNNNNNNNNIGNSGNIGGVGNNNSSISNSNNNSSSNLNANLNGNTPVKITSENSSSSLWNIFKKKSPSSTPPSSTNNLSPQSPQTPSHLSADGSGNISPNLSPPIPVNFSYTPAVVTSSTINKDQQKD.

A Kinesin motor domain is found at 3 to 329 (SIRVVCRFRP…LRFGSRAKNI (327 aa)). 85 to 92 (GQTGSGKT) is an ATP binding site. 7 disordered regions span residues 377–429 (KSSG…SSNV), 573–600 (SSIA…KHAD), 611–630 (LLQR…TATS), 638–665 (ISES…ATSS), 973–1016 (GGGG…SANL), 1032–1114 (KAEP…PVKI), and 1127–1193 (FKKK…QQKD). Residues 405 to 429 (SSNLSNSVNSTSNLNTSSNTSSSNV) show a composition bias toward low complexity. The stretch at 450–962 (ELIKVLQEKC…SQVGVDAQNT (513 aa)) forms a coiled coil. 2 stretches are compositionally biased toward polar residues: residues 573 to 585 (SSIA…TPKS) and 614 to 630 (RTPS…TATS). 2 stretches are compositionally biased toward low complexity: residues 643 to 665 (NIGS…ATSS) and 985 to 1006 (HSSS…NNNH). A compositionally biased stretch (polar residues) spans 1007–1016 (TTPTPLSANL). Composition is skewed to low complexity over residues 1044 to 1078 (NTSI…IGNS), 1086 to 1109 (NNNS…LNGN), and 1132 to 1149 (PSST…QSPQ). Composition is skewed to polar residues over residues 1150–1165 (TPSH…ISPN) and 1174–1193 (FSYT…QQKD).

It belongs to the TRAFAC class myosin-kinesin ATPase superfamily. Kinesin family. Kinesin subfamily. As to quaternary structure, dimer.

The protein localises to the cytoplasm. It localises to the cytoskeleton. In terms of biological role, microtubule-associated force-producing protein that plays a role in organelle transport. Its motor activity is directed toward the microtubule's plus end. The maximal velocity in an inverted motility assay (moving microtubules on fixed motors) was 1.96 um/s. The chain is Kinesin-related protein 3 (kif3) from Dictyostelium discoideum (Social amoeba).